The sequence spans 457 residues: Siroheme synthase (457 aa).

The interval 1 to 204 is precorrin-2 dehydrogenase /sirohydrochlorin ferrochelatase; sequence MDHLPIFCQL…NDQKAITETT (204 aa). Residues 22–23 and 43–44 each bind NAD(+); these read DV and LA. Ser128 bears the Phosphoserine mark. The tract at residues 216-457 is uroporphyrinogen-III C-methyltransferase; it reads GEVVLVGAGP…RDKLNWFSNH (242 aa). An S-adenosyl-L-methionine-binding site is contributed by Pro225. Residue Asp248 is the Proton acceptor of the active site. Lys270 acts as the Proton donor in catalysis. S-adenosyl-L-methionine is bound by residues 301–303, Ile306, 331–332, Met382, and Gly411; these read GGD and TA.

This sequence in the N-terminal section; belongs to the precorrin-2 dehydrogenase / sirohydrochlorin ferrochelatase family. In the C-terminal section; belongs to the precorrin methyltransferase family.

The enzyme catalyses uroporphyrinogen III + 2 S-adenosyl-L-methionine = precorrin-2 + 2 S-adenosyl-L-homocysteine + H(+). The catalysed reaction is precorrin-2 + NAD(+) = sirohydrochlorin + NADH + 2 H(+). It carries out the reaction siroheme + 2 H(+) = sirohydrochlorin + Fe(2+). It functions in the pathway cofactor biosynthesis; adenosylcobalamin biosynthesis; precorrin-2 from uroporphyrinogen III: step 1/1. The protein operates within cofactor biosynthesis; adenosylcobalamin biosynthesis; sirohydrochlorin from precorrin-2: step 1/1. It participates in porphyrin-containing compound metabolism; siroheme biosynthesis; precorrin-2 from uroporphyrinogen III: step 1/1. Its pathway is porphyrin-containing compound metabolism; siroheme biosynthesis; siroheme from sirohydrochlorin: step 1/1. It functions in the pathway porphyrin-containing compound metabolism; siroheme biosynthesis; sirohydrochlorin from precorrin-2: step 1/1. Multifunctional enzyme that catalyzes the SAM-dependent methylations of uroporphyrinogen III at position C-2 and C-7 to form precorrin-2 via precorrin-1. Then it catalyzes the NAD-dependent ring dehydrogenation of precorrin-2 to yield sirohydrochlorin. Finally, it catalyzes the ferrochelation of sirohydrochlorin to yield siroheme. This is Siroheme synthase from Shigella boydii serotype 18 (strain CDC 3083-94 / BS512).